A 277-amino-acid chain; its full sequence is NH(3)-dependent NAD(+) synthetase (277 aa).

An ATP-binding site is contributed by 47-54 (GISGGQDS). Residue Asp-53 coordinates Mg(2+). Residue Arg-141 participates in deamido-NAD(+) binding. Residue Thr-161 coordinates ATP. Glu-166 serves as a coordination point for Mg(2+). Residues Lys-174 and Asp-181 each coordinate deamido-NAD(+). 2 residues coordinate ATP: Lys-190 and Thr-212. 261 to 262 (HK) is a binding site for deamido-NAD(+).

Belongs to the NAD synthetase family. As to quaternary structure, homodimer.

It catalyses the reaction deamido-NAD(+) + NH4(+) + ATP = AMP + diphosphate + NAD(+) + H(+). Its pathway is cofactor biosynthesis; NAD(+) biosynthesis; NAD(+) from deamido-NAD(+) (ammonia route): step 1/1. Its function is as follows. Catalyzes the ATP-dependent amidation of deamido-NAD to form NAD. Uses ammonia as a nitrogen source. The sequence is that of NH(3)-dependent NAD(+) synthetase from Lactobacillus gasseri (strain ATCC 33323 / DSM 20243 / BCRC 14619 / CIP 102991 / JCM 1131 / KCTC 3163 / NCIMB 11718 / NCTC 13722 / AM63).